A 7059-amino-acid polypeptide reads, in one-letter code: MSKINKYGLELHWAPEFPWMFEDAEEKLDNPSSSEVDIVCSTTAQKLETGGICPENHVMVDCRRLLKQECCVQSSLIREIVMNTRPYDLEVLLQDALQSREAVLVTPPLGMSLEACYVRGCNPNGWTMGLFRRRSVCNTGRCAVNKHVAYQLYMIDPAGVCFGAGQFVGWVIPLAFMPVQSRKFIAPWVMYLRKCGEKGAYIKDYKRGGFEHVYNFKVEDAYDLVHDEPKGKFSKKAYALIRGYRGVKPLLYVDQYGCDYTGGLADGLEAYADKTLQEMKALFPIWSQELPFDVTVAWHVVRDPRYVMRLQSASTIRSVAYVANPTEDLCDGSVVIKEPVHVYADDSIILRQHNLVDIMSCFYMEADAVVNAFYGVDLKDCGFVMQFGYIDCEQDLCDFKGWVPGNMIDGFACTTCGHVYETGDLLAQSSGVLPVNPVLHTKSAAGYGGFGCKDSFTLYGQTVVYFGGCVYWSPARNIWIPILKSSVKSYDGLVYTGVVGCKAIVKETNLICKALYLDYVQHKCGNLHQRELLGVSDVWHKQLLLNRGVYKPLLENIDYFNMRRAKFSLETFTVCADGFMPFLLDDLVPRAYYLAVSGQAFCDYAGKICHAVVSKSKELLDVSVDSLGAAIHYLNSKIVDLAQHFSDFGTSFVSKIVHFFKTFTTSTALAFAWVLFHVLHGAYIVVESDIYFGKNIPRYASAVAQAFRSGAKVGLDSLRVTFIDGLSCFKIGRRRICLSGSKIYEVERGLLHSSQLPLDVYDLTMPSQVQKTKQKGIYLKGSGSDFSLADSVVEVVTTSLTPCGYSEPPKVADKICIVDNVYMAKAGDKYYPVVVDGHVGLLDQAWRVPCAGRCVTFKEQPTVNEIASTPKTIKVFYELDKDFNTILNTACGEFEVDDTVDMEEFYAVVIDAIEEKLSPCKELEGVGAKVSAFLQKLEDNSLFLFDEAGEEVLAPKLYCAFTAPEDDDFLEESGVEEDDVEGEETDLTVTSAGEPCVASEQEESSEILEDTLDDGPCVETSDSQVEEDVQMSDFGDLESVIQDYENVCFEFYTTEPEFVKVLDLYVPKATRNNCWLRSVLAVMQKLPCQFKDKNLQDLWVLYKQQYSQLFVDTLVNKIPANIVVPQGGYVADFAYWFLTLCDWQCVAYWKCIKCDLALKLKGLDAMFFYGDVVSHVCKCGESMVLIDVDVPFTAHFALKDKLFCAFITKRSVYKAACVVDVNDSHSMAVVDGKQIDDHRITSITSDKFDFIIGHGTSFSMTTFEIAQLYGSCITPNVCFVKGDIIKVSKRVKAEVVVNPANGHMAHGGGVAKAIAVAAGQQFVKETTDMVKSKGVCATGDCYVSTGGKLCKTVLNVVGPDARTQGKQSYALLERVYKHLNKYDCVVTTLISAGIFSVPSDVSLTYLLGTAKKQVVLVSNNQEDFDLISKCQITAVEGTKKLAERLSFNVGRSIVYETDANKLILSNDVAFVSTFNVLQDVLSLRHDIALDDDARTFVQSNVDVVPEGWRVVNKFYQINGVRPVKYFECPGGIDICSQDKVFGYVQQGSFNKATVAQIKALFLDKVDILLTVDGVNFTNRFVPVGESFGKSLGNVFCDGVNVTKHKCDINYKGKVFFQFDNLSSEDLKAVRSSFNFDQKELLAYYNMLVNCSKWQVVFNGKYFTFKQANNNCFVNVSCLMLQSLNLKFKIVQWQEAWLEFRSGRPARFVSLVLAKGGFKFGDPADSRDFLRVVFSQVDLTGAICDFEIACKCGVKQEQRTGVDAVMHFGTLSREDLEIGYTVDCSCGKKLIHCVRFDVPFLICSNTPASVKLPKGVGSANIFKGDKVGHYVHVKCEQSYQLYDASNVKKVTDVTGNLSDCLYLKNLKQTFKSVLTTYYLDDVKKIEYKPDLSQYYCDGGKYYTQRIIKAQFKTFEKVDGVYTNFKLIGHTVCDILNAKLGFDSSKEFVEYKVTEWPTATGDVVLATDDLYVKRYERGCITFGKPVIWLSHEQASLNSLTYFNRPLLVDENKFDVLKVDDVDDGGDISESDAKEPKEINIIKLSGVKKPFKVEDSVIVNDDTSEIKYVKSLSIVDVYDMWLTGCRCVVRTANALSRAVNVPTIRKFIKFGMTLVSIPIDLLNLREIKPVFNVVKAVRNKISACFNFIKWLFVLLFGWIKISADNKVIYTTEVASKLTCKLVALAFKNAFLTFKWSVVARGACIIATIFLLWFNFIYANVIFSDFYLPKIGFLPTFVGKIVQWIKNTFSLVTICDLYSIQDVGFKNQYCNGSIACQFCLAGFDMLDNYKAIDVVQYEADRRAFVDYTGVLKIVIELIVSYALYTAWFYPLFALISIQILTTWLPELLMLSTLHWSVRLLVSLANMLPAHVFMRFYIIIASFIKLFSLFRHVAYGCSKSGCLFCYKRNRSLRVKCSTIVGGMIRYYDVMANGGTGFCSKHQWNCIDCDSYKPGNTFITVEAALDLSKELKRPIQPTDVAYHTVTDVKQVGCYMRLFYDRDGQRTYDDVNASLFVDYSNLLHSKVKSVPNMHVVVVENDADKANFLNAAVFYAQSLFRPILMVDKILITTANTGTSVTETMFDVYVDTFLSMFDVDKKSLNALIATAHSSIKQGTQICKVLDTFLSCARKSCSIDSDVDTKCLADSVMSAVSAGLELTDESCNNLVPTYLKGDNIVAADLGVLIQNSAKHVQGNVAKIAGVSCIWSVDAFNQLSSDFQHKLKKACCKTGLKLELTYNKQMANVSVLTTPFSLKGGAVFSYFVYVCFVLSLVCFIGLWCLMPTYTVHKSDFQLPVYASYKVLDNGVIRDVSVEDVCFANKFEQFDQWYESTFGLSYYSNSMACPIVVAVVDQDFGSTVFNVPTKVLRYGYHVLHFITHALSADGVQCYTPHSQISYSNFYASGCVLSSACTMFAMADGSPQPYCYTDGLMQNASLYSSLVPHVRYNLANAKGFIRLPEVLREGLVRIVRTRSMSYCRVGLCEEADEGICFNFNGSWVLNNDYYRSLPGTFCGRDVFDLIYQLFKGLAQPVDFLALTASSIAGAILAVIVVLGFYYLIKLKRAFGDYTSIVFVNVIVWCVNFMMLFVFQVYPTLSCVYAICYFYATLYFPSEISVIMHLQWLVMYGTIMPLWFCLLYISVVVSNHAFWVFSYCRQLGTSVRSDGTFEEMALTTFMITKDSYCKLKNSLSDVAFNRYLSLYNKYRYYSGKMDTAAYREAACSQLAKAMDTFTNNNGSDVLYQPPTASVSTSFLQSGIVKMVNPTSKVEPCIVSVTYGNMTLNGLWLDDKVYCPRHVICSASDMTNPDYTNLLCRVTSSDFTVLFDRLSLTVMSYQMQGCMLVLTVTLQNSRTPKYTFGVVKPGETFTVLAAYNGKPQGAFHVTMRSSYTIKGSFLCGSCGSVGYVIMGDCVKFVYMHQLELSTGCHTGTDFNGDFYGPYKDAQVVQLPVQDYIQSVNFVAWLYAAILNNCNWFVQSDKCSVEDFNVWALSNGFSQVKSDLVIDALASMTGVSLETLLAAIKRLKNGFQGRQIMGSCSFEDELTPSDVYQQLAGIKLQSKRTRLVKGIVCWIMASTFLFSCIITAFVKWTMFMYVTTNMLSITFCALCVISLAMLLVKHKHLYLTMYIIPVLFTLLYNNYLVVYKQTFRGYVYAWLSYYVPSVEYTYTDEVIYGMLLLIGMVFVTLRSINHDLFSFIMFVGRVISVVSLWYMGSNLEEEILLMLASLFGTYTWTTALSMAAAKVIAKWVAVNVLYFTDIPQIKIVLVCYLFIGYIISCYWGLFSLMNSLFRMPLGVYNYKISVQELRYMNANGLRPPKNSFEALMLNFKLLGIGGVPIIEVSQFQSKLTDVKCANGGLLNCLQHLHVASNSKLWQYCSTLHNEILATSDLGVAFEKLAQLLIVLFANPAAVDSKCLTSIEEVCDDYAKDNTVLQALQSEFVNMASFVEYEVAKKNLDEACSSGSANQQQLKQLEKACNIAKSAYERDRAVARKLERMADLALTNMYKEARINDKKSKVVSALQTMLFSMVRKLDNQALNSILDNAVKGCVPLNAIPSLAANTLTIIVPDKSVYDQVVDNVYVTYAGNVWQIQTIQDSDGTNKQLHEISDDCNWPLVIIANRHNEVSATVLQNNELMPAKLKTQVVNSGPDQTCNTPTQCYYNNSYNGKIVYAILSDVDGLKYTKILKDDGNFVVLELDPPCKFTVQDVKGLKIKYLYFVKGCNTLARGWVVGTISSTVRLQAGTATEYASNSSILSLCAFSVDPKKTYLDFIQQGGTPIANCVKMLCDHAGTGMAITVKPDATTSQDSYGGASVCIYCRARVEHPDVDGLCKLRGKFVQVPVGIKDPVSYVLTHDVCQVCGFWRDGSCSCVSTDTTVQSKDTNFLNRVRGTSVDARLVPCASGLSTDVQLRAFDICNASVAGIGLHLKVNCCRFQRVDENGDKLDQFFVVKRTDLTIYNREMECYERVKDCKFVAEHDFFTFDVEGSRVPHIVRKDLTKYTMLDLCYALRHFDRNDCMLLCDILSIYAGCEQSYFTKKDWYDFVENPDIINVYKKLGPIFNRALVSATEFADKLVEVGLVGILTLDNQDLNGKWYDFGDYVIAAPGCGVAIADSYYSYMMPMLTMCHALDCELYVNNAYRLFDLVQYDFTDYKLELFNKYFKHWSMPYHPNTVDCQDDRCIIHCANFNILFSMVLPNTCFGPLVRQIFVDGVPFVVSIGYHYKELGIVMNMDVDTHRYRLSLKDLLLYAADPALHVASASALYDLRTCCFSVAAITSGVKFQTVKPGNFNQDFYDFILSKGLLKEGSSVDLKHFFFTQDGNAAITDYNYYKYNLPTMVDIKQLLFVLEVVYKYFEIYDGGCIPAAQVIVNNYDKSAGYPFNKFGKARLYYEALSFEEQDEIYAYTKRNVLPTLTQMNLKYAISAKNRARTVAGVSILSTMTGRMFHQKCLKSIAATRGVPVVIGTTKFYGGWDDMLRRLIKDVDNPVLMGWDYPKCDRAMPNILRIVSSLVLARKHEACCSQSDRFYRLANECAQVLSEIVMCGGCYYVKPGGTSSGDATTAFANSVFNICQAVSANVCALMSCNGNKIEDLSIRALQKRLYSHVYRSDMVDSTFVTEYYEFLNKHFSMMILSDDGVVCYNSDYASKGYIANISAFQQVLYYQNNVFMSESKCWVENDINNGPHEFCSQHTMLVKMDGDDVYLPYPVPSRILGAGCFVDDLLKTDSVLLIERFVSLAIDAYPLVYHENEEYQKVFRVYLEYIKKLYNELGNQILDSYSVILSTCDGQKFTDESFYKNMYLRSAVMQSVGACVVCSSQTSLRCGSCIRKPLLCCKCCYDHVMATDHKYVLSVSPYVCNAPGCDVNDVTKLYLGGMSYYCEDHKPQYSFKLVMNGMVFGLYKQSCTGSPYIDDFNRIASCKWTDVDDYILANECTERLKLFAAETQKATEEAFKQSYASATIQEIVSERELILSWEIGKVKPPLNKNYVFTGYHFTKNGKTVLGEYVFDKSELTNGVYYRATTTYKLSVGDVFVLTSHSVANLSAPTLVPQENYSSIRFASVYSVLETFQNNVVNYQHIGMKRYCTVQGPPGTGKSHLAIGLAVYYCTARVVYTAASHAAVDALCEKAYKFLNINDCTRIVPAKVRVECYDKFKINDTTRKYVFTTINALPEMVTDIVVVDEVSMLTNYELSVINARIRAKHYVYIGDPAQLPAPRVLLSKGTLEPKYFNTVTKLMCCLGPDIFLGTCYRCPKEIVDTVSALVYENKLKAKNESSSLCFKVYYKGVTTHESSSAVNMQQIYLINKFLKANPLWHKAVFISPYNSQNFAAKRVLGLQTQTVDSAQGSEYDYVIYSQTAETAHSVNVNRFNVAITRAKKGILCVMSNMQLFEALQFTTLTVDKVPQAVETRVQCSTNLFKDCSKSYSGYHPAHAPSFLAVDDKYKATGDLAVCLGIGDSAVTYSRLISLMGFKLDVTLDGYCKLFITKEEAVKRVRAWVGFDAEGAHATRDSIGTNFPLQLGFSTGIDFVVEATGLFADRDGYSFKKAVAKAPPGEQFKHLIPLMTRGQRWDVVRPRIVQMFADHLIDLSDCVVLVTWAANFELTCLRYFAKVGREISCNVSTKRATAYNSRTGYYGCWRHSVTCDYLYNPLIVDIQQWGYIGSLSSNHDLYCSVHKGAHVASSDAIMTRCLAVYDCFCNNINWNVEYPIISNELSINTSCRVLQRVMLKAAMLCNRYTLCYDIGNPKAIACVKDFDFKFYDAQPIVKSVKTLLYFFEAHKDSFKDGLCMFWNCNVDKYPPNAVVCRFDTRVLNNLNLPGCNGGSLYVNKHAFHTKPFSRAAFEHLKPMPFFYYSDTPCVYMDGMDAKQVDYVPLKSATCITRCNLGGAVCLKHAEEYREYLESYNTATTAGFTFWVYKTFDFYNLWNTFTKLQSLENVVYNLVKTGHYTGQAGEMPCAIINDKVVAKIDKEDVVIFINNTTYPTNVAVELFAKRSIRHHPELKLFRNLNIDVCWKHVIWDYARESIFCSNTYGVCMYTDLKLIDKLNVLFDGRDNGALEAFKRSNNGVYISTTKVKSLSMIRGPPRAELNGVVVDKVGDTDCVFYFAVRKEGQDVIFSQFDSLRVSSNQSPQGNLGSNEPGNVGGNDALATSTIFTQSRVISSFTCRTDMEKDFIALDQDVFIQKYGLEDYAFEHIVYGNFNQKIIGGLHLLIGLYRRQQTSNLVIQEFVSYDSSIHSYFITDEKSGGSKSVCTVIDILLDDFVALVKSLNLNCVSKVVNVNVDFKDFQFMLWCNDEKVMTFYPRLQAASDWKPGYSMPVLYKYLNSPMERVSLWNYGKPVTLPTGCMMNVAKYTQLCQYLNTTTLAVPVNTRVLHLGAGSEKGVAPGSAVLRQWLPAGTILRQWLPAGTILVHNDLYPFVSDSVATYFGDCITLPFDCQWDLIISDMYDLLLDIGVHVVRCSYIHCHMIRDKLALGGSVAIKITEFSWNAELYKLMGYFAFWTVFCTNANASSSEGFLIGINYLGKPKVEIDGNVMHAIICFGEIPQFGTGVLIACLIWLNSRLSWLVMP.

The CoV Nsp1 globular domain maps to 54–196 (PENHVMVDCR…PWVMYLRKCG (143 aa)). Residues 216–246 (FKVEDAYDLVHDEPKGKFSKKAYALIRGYRG) enclose the BetaCoV Nsp1 C-terminal domain. Residues 250-519 (LLYVDQYGCD…LICKALYLDY (270 aa)) form the CoV Nsp2 N-terminal domain. Residues Cys-392, Cys-397, Cys-413, and Cys-416 each coordinate Zn(2+). The C4 stretch occupies residues 392–416 (CEQDLCDFKGWVPGNMIDGFACTTC). Residues 524–713 (CGNLHQRELL…AQAFRSGAKV (190 aa)) form the CoV Nsp2 middle domain. In terms of domain architecture, CoV Nsp2 C-terminal spans 733–851 (RRRICLSGSK…LDQAWRVPCA (119 aa)). Residues 853 to 966 (RCVTFKEQPT…LYCAFTAPED (114 aa)) enclose the Ubiquitin-like 1 domain. The span at 972 to 986 (ESGVEEDDVEGEETD) shows a compositional bias: acidic residues. The interval 972–1000 (ESGVEEDDVEGEETDLTVTSAGEPCVASE) is disordered. Residues 1036–1274 (DLESVIQDYE…IAQLYGSCIT (239 aa)) enclose the Peptidase C16 1 domain. Residue Cys-1074 is the For PL1-PRO activity of the active site. Cys-1151, Cys-1154, Cys-1177, and Cys-1179 together coordinate Zn(2+). The C4-type 1 zinc-finger motif lies at 1151 to 1179 (CIKCDLALKLKGLDAMFFYGDVVSHVCKC). Residues His-1225 and Asp-1236 each act as for PL1-PRO activity in the active site. Residues 1275 to 1435 (PNVCFVKGDI…LISKCQITAV (161 aa)) form the Macro domain. Residues 1491-1563 (DDARTFVQSN…VAQIKALFLD (73 aa)) form the DPUP domain. One can recognise a Ubiquitin-like 2 domain in the interval 1562–1617 (LDKVDILLTVDGVNFTNRFVPVGESFGKSLGNVFCDGVNVTKHKCDINYKGKVFFQ). The Peptidase C16 2 domain occupies 1631-1892 (SSFNFDQKEL…KIEYKPDLSQ (262 aa)). Residue Cys-1671 is the For PL2-PRO activity of the active site. Zn(2+) is bound by residues Cys-1749, Cys-1751, Cys-1783, and Cys-1785. The C4-type 2 zinc finger occupies 1749 to 1785 (CKCGVKQEQRTGVDAVMHFGTLSREDLEIGYTVDCSC). Residues His-1828 and Asp-1842 each act as for PL2-PRO activity in the active site. Residues 1906-2007 (IKAQFKTFEK…TYFNRPLLVD (102 aa)) enclose the Nucleic acid-binding domain. In terms of domain architecture, G2M spans 2020-2169 (DDGGDISESD…ADNKVIYTTE (150 aa)). Transmembrane regions (helical) follow at residues 2138–2158 (ISAC…WIKI), 2199–2219 (ACII…NVIF), and 2221–2241 (DFYL…VQWI). Positions 2138–2385 (ISACFNFIKW…ASFIKLFSLF (248 aa)) are HD1. Residues 2235 to 2296 (GKIVQWIKNT…AIDVVQYEAD (62 aa)) enclose the 3Ecto domain. 2 disulfide bridges follow: Cys-2251/Cys-2275 and Cys-2266/Cys-2272. Helical transmembrane passes span 2313-2333 (LIVS…LISI), 2343-2363 (LLML…ANML), and 2365-2385 (AHVF…FSLF). Positions 2383–2473 (SLFRHVAYGC…ELKRPIQPTD (91 aa)) are Y1. In terms of domain architecture, CoV Nsp3 Y spans 2383–2750 (SLFRHVAYGC…LTTPFSLKGG (368 aa)). The Zn(2+) site is built by His-2387, Cys-2392, Cys-2397, Cys-2400, Cys-2433, His-2436, Cys-2440, and Cys-2443. Residues 2387–2400 (HVAYGCSKSGCLFC) are ZF1. The interval 2433–2443 (CSKHQWNCIDC) is ZF2. The interval 2474–2566 (VAYHTVTDVK…MVDKILITTA (93 aa)) is Y2. A coV-Y region spans residues 2474 to 2750 (VAYHTVTDVK…LTTPFSLKGG (277 aa)). Positions 2567–2649 (NTGTSVTETM…DSVMSAVSAG (83 aa)) are Y3. Residues 2650–2750 (LELTDESCNN…LTTPFSLKGG (101 aa)) form a Y4 region. The next 7 helical transmembrane spans lie at 2752 to 2772 (VFSY…IGLW), 2824 to 2844 (STFG…VAVV), 3009 to 3029 (VFDL…FLAL), 3031 to 3051 (ASSI…YYLI), 3063 to 3083 (IVFV…VFQV), 3090 to 3110 (VYAI…SVIM), and 3115 to 3135 (LVMY…SVVV). The interval 2752–3135 (VFSYFVYVCF…FCLLYISVVV (384 aa)) is HD2. The region spanning 3149–3246 (LGTSVRSDGT…TASVSTSFLQ (98 aa)) is the Nsp4C domain. One can recognise a Peptidase C30 domain in the interval 3247-3549 (SGIVKMVNPT…YQQLAGIKLQ (303 aa)). Residues His-3287 and Cys-3391 each act as for 3CL-PRO activity in the active site. The HD3 stretch occupies residues 3319 to 3775 (LSLTVMSYQM…IISCYWGLFS (457 aa)). 7 helical membrane-spanning segments follow: residues 3558-3578 (GIVC…TAFV), 3588-3608 (TNML…MLLV), 3615-3635 (LTMY…LVVY), 3657-3677 (TYTD…FVTL), 3684-3704 (LFSF…WYMG), 3711-3731 (ILLM…LSMA), and 3755-3775 (IVLV…GLFS). The RdRp Nsp7 cofactor domain maps to 3837–3925 (SKLTDVKCAN…DYAKDNTVLQ (89 aa)). The region spanning 3926–4122 (ALQSEFVNMA…HNEVSATVLQ (197 aa)) is the RdRp Nsp8 cofactor domain. The 110-residue stretch at 4123-4232 (NNELMPAKLK…GTISSTVRLQ (110 aa)) folds into the Nsp9 ssRNA-binding domain. The 138-residue stretch at 4233-4370 (AGTATEYASN…CVSTDTTVQS (138 aa)) folds into the ExoN/MTase coactivator domain. Zn(2+) contacts are provided by Cys-4306, Cys-4309, His-4315, Cys-4322, Cys-4348, Cys-4351, Cys-4359, and Cys-4361. 2 zinc fingers span residues 4306-4322 (CIYC…DGLC) and 4348-4361 (CQVC…SCSC). The NiRAN domain maps to 4375-4630 (FLNRVRGTSV…DCELYVNNAY (256 aa)). Positions 4578 and 4587 each coordinate Mn(2+). The Nsp12 Interface domain maps to 4631–4729 (RLFDLVQYDF…MNMDVDTHRY (99 aa)). His-4660, Cys-4666, Cys-4671, Cys-4675, and Cys-4852 together coordinate Zn(2+). The region spanning 4730–5297 (RLSLKDLLLY…NMYLRSAVMQ (568 aa)) is the Nsp12 RNA-dependent RNA polymerase domain. The segment at 4732-4946 (SLKDLLLYAA…HQKCLKSIAA (215 aa)) is rdRp Fingers N-ter. The interval 4947–4985 (TRGVPVVIGTTKFYGGWDDMLRRLIKDVDNPVLMGWDYP) is rdRp Palm N-ter. The RdRp catalytic domain maps to 4977-5139 (PVLMGWDYPK…CYNSDYASKG (163 aa)). Positions 4986–5044 (KCDRAMPNILRIVSSLVLARKHEACCSQSDRFYRLANECAQVLSEIVMCGGCYYVKPGG) are rdRp Fingers C-ter. 3 residues coordinate Zn(2+): His-5007, Cys-5010, and Cys-5011. Positions 5045 to 5180 (TSSGDATTAF…NNGPHEFCSQ (136 aa)) are rdRp Palm C-ter. Residues Ser-5124, Asp-5125, and Asp-5126 contribute to the active site. The tract at residues 5181-5297 (HTMLVKMDGD…NMYLRSAVMQ (117 aa)) is rdRp Thumb. Residues 5298 to 5410 (SVGACVVCSS…DDFNRIASCK (113 aa)) enclose the CV ZBD domain. Positions 5302, 5305, 5313, 5316, 5323, 5326, 5330, 5336, 5347, 5352, 5369, and 5372 each coordinate Zn(2+). A (+)RNA virus helicase ATP-binding domain is found at 5553 to 5734 (SVLETFQNNV…MCCLGPDIFL (182 aa)). 5578–5585 (GPPGTGKS) is a binding site for ATP. Positions 5735 to 5904 (GTCYRCPKEI…VETRVQCSTN (170 aa)) constitute a (+)RNA virus helicase C-terminal domain. One can recognise an ExoN domain in the interval 5971–6186 (LFITKEEAVK…RCLAVYDCFC (216 aa)). Active-site residues include Asp-5989, Glu-5991, and Glu-6090. His-6156, Cys-6160, and His-6163 together coordinate Zn(2+). Residues His-6167 and Asp-6172 contribute to the active site. Cys-6178 is a Zn(2+) binding site. Positions 6195–6421 (YPIISNELSI…NLWNTFTKLQ (227 aa)) constitute an N7-MTase domain. An S-adenosyl-L-methionine-binding site is contributed by 6230-6236 (DIGNPKA). Residues 6308-6322 (CNGGSLYVNKHAFHT) form a gpppA-binding region. Zn(2+) contacts are provided by Cys-6346, Cys-6367, Cys-6378, and His-6381. One can recognise a Nsp15 N-terminal oligomerization domain in the interval 6422-6482 (SLENVVYNLV…NVAVELFAKR (61 aa)). The region spanning 6483–6603 (SIRHHPELKL…FAVRKEGQDV (121 aa)) is the AV-Nsp11N/CoV-Nsp15M domain. The 140-residue stretch at 6653-6792 (TCRTDMEKDF…NDEKVMTFYP (140 aa)) folds into the NendoU domain. Residues His-6683, His-6698, Lys-6738, Lys-6841, Asp-6935, Lys-6971, and Glu-7004 contribute to the active site. The Nidovirus-type SAM-dependent 2'-O-MTase domain maps to 6797 to 7059 (ASDWKPGYSM…NSRLSWLVMP (263 aa)).

It belongs to the coronaviruses polyprotein 1ab family. Interacts with host PHB and PHB2. As to quaternary structure, interacts with papain-like protease nsp3 and non-structural protein 6. In terms of assembly, monomer. Homodimer. Only the homodimer shows catalytic activity. Interacts with nsp8 and nsp12 to form the replication-transcription complex (RTC): nsp12, nsp7, two subunits of nsp8, and up to two subunits of nsp13. As to quaternary structure, interacts with nsp7, nsp13 and nsp12 to form the replication-transcription complex (RTC): nsp12, nsp7, two subunits of nsp8, and up to two subunits of nsp13. In terms of assembly, interacts with nsp12. Interacts with proofreading exoribonuclease nsp14 and 2'-O-methyltransferase nsp16; these interactions enhance nsp14 and nsp16 enzymatic activities. As to quaternary structure, interacts with nsp7 and nsp8 to form the replication-transcription complex (RTC): nsp12, nsp7, two subunits of nsp8, and up to two subunits of nsp13. Interacts with nsp9. In terms of assembly, interacts with nsp8 to form the replication-transcription complex (RTC): nsp12, nsp7, two subunits of nsp8, and up to two subunits of nsp13. It depends on Mn(2+) as a cofactor. The cofactor is Mg(2+). Post-translationally, specific enzymatic cleavages in vivo by its own proteases yield mature proteins. 3CL-PRO and PL-PRO proteinases are autocatalytically processed.

Its subcellular location is the host membrane. The protein localises to the host cytoplasm. It localises to the host perinuclear region. The protein resides in the host endoplasmic reticulum-Golgi intermediate compartment. It catalyses the reaction RNA(n) + a ribonucleoside 5'-triphosphate = RNA(n+1) + diphosphate. The enzyme catalyses ATP + H2O = ADP + phosphate + H(+). The catalysed reaction is Thiol-dependent hydrolysis of ester, thioester, amide, peptide and isopeptide bonds formed by the C-terminal Gly of ubiquitin (a 76-residue protein attached to proteins as an intracellular targeting signal).. It carries out the reaction a 5'-end (N(7)-methyl 5'-triphosphoguanosine)-ribonucleoside in mRNA + S-adenosyl-L-methionine = a 5'-end (N(7)-methyl 5'-triphosphoguanosine)-(2'-O-methyl-ribonucleoside) in mRNA + S-adenosyl-L-homocysteine + H(+). It catalyses the reaction uridylyl-uridylyl-ribonucleotide-RNA = a 3'-end uridylyl-2',3'-cyclophospho-uridine-RNA + a 5'-end dephospho-ribonucleoside-RNA. The enzyme catalyses a 5'-end diphospho-ribonucleoside in mRNA + GTP + H(+) = a 5'-end (5'-triphosphoguanosine)-ribonucleoside in mRNA + diphosphate. The catalysed reaction is a 5'-end (5'-triphosphoguanosine)-ribonucleoside in mRNA + S-adenosyl-L-methionine = a 5'-end (N(7)-methyl 5'-triphosphoguanosine)-ribonucleoside in mRNA + S-adenosyl-L-homocysteine. In terms of biological role, the replicase polyprotein of coronaviruses is a multifunctional protein: it contains the activities necessary for the transcription of negative stranded RNA, leader RNA, subgenomic mRNAs and progeny virion RNA as well as proteinases responsible for the cleavage of the polyprotein into functional products. Its function is as follows. Inhibits host translation by interacting with the 40S ribosomal subunit. The nsp1-40S ribosome complex further induces an endonucleolytic cleavage near the 5'UTR of host mRNAs, targeting them for degradation. Viral mRNAs are not susceptible to nsp1-mediated endonucleolytic RNA cleavage thanks to the presence of a 5'-end leader sequence and are therefore protected from degradation. By suppressing host gene expression, nsp1 facilitates efficient viral gene expression in infected cells and evasion from host immune response. Functionally, may play a role in the modulation of host cell survival signaling pathway by interacting with host PHB and PHB2. Indeed, these two proteins play a role in maintaining the functional integrity of the mitochondria and protecting cells from various stresses. Responsible for the cleavages located at the N-terminus of the replicase polyprotein. In addition, PL-PRO possesses a deubiquitinating/deISGylating activity and processes both 'Lys-48'- and 'Lys-63'-linked polyubiquitin chains from cellular substrates. Participates together with nsp4 in the assembly of virally-induced cytoplasmic double-membrane vesicles necessary for viral replication. Antagonizes innate immune induction of type I interferon by blocking the phosphorylation, dimerization and subsequent nuclear translocation of host IRF3. Also prevents host NF-kappa-B signaling. In terms of biological role, participates in the assembly of virally-induced cytoplasmic double-membrane vesicles necessary for viral replication. Its function is as follows. Cleaves the C-terminus of replicase polyprotein at 11 sites. Recognizes substrates containing the core sequence [ILMVF]-Q-|-[SGACN]. Also able to bind an ADP-ribose-1''-phosphate (ADRP). Functionally, plays a role in the initial induction of autophagosomes from host endoplasmic reticulum. Later, limits the expansion of these phagosomes that are no longer able to deliver viral components to lysosomes. Forms a hexadecamer with nsp8 (8 subunits of each) that may participate in viral replication by acting as a primase. Alternatively, may synthesize substantially longer products than oligonucleotide primers. In terms of biological role, forms a hexadecamer with nsp7 (8 subunits of each) that may participate in viral replication by acting as a primase. Alternatively, may synthesize substantially longer products than oligonucleotide primers. Its function is as follows. Forms a primer, NSP9-pU, which is utilized by the polymerase for the initiation of RNA chains. Interacts with ribosome signal recognition particle RNA (SRP). Together with NSP8, suppress protein integration into the cell membrane, thereby disrupting host immune defenses. Functionally, plays a pivotal role in viral transcription by stimulating both nsp14 3'-5' exoribonuclease and nsp16 2'-O-methyltransferase activities. Therefore plays an essential role in viral mRNAs cap methylation. RNA-directed RNA polymerase that catalyzes the transcription of viral genomic and subgenomic RNAs. Acts in complex with nsp7 and nsp8 to transcribe both the minus and positive strands of genomic RNA. The kinase-like NiRAN domain of NSP12 attaches one or more nucleotides to the amino terminus of NSP9, forming a covalent RNA-protein intermediate that serves as transcription/replication primer. Subgenomic RNAs (sgRNAs) are formed by discontinuous transcription: The polymerase has the ability to pause at transcription-regulating sequences (TRS) and jump to the leader TRS, resulting in a major deletion. This creates a series of subgenomic RNAs that are replicated, transcribed and translated. In addition, Nsp12 is a subunit of the viral RNA capping enzyme that catalyzes the RNA guanylyltransferase reaction for genomic and sub-genomic RNAs. Subsequently, the NiRAN domain transfers RNA to GDP, and forms the core cap structure GpppA-RNA. In terms of biological role, multi-functional protein with a zinc-binding domain in N-terminus displaying RNA and DNA duplex-unwinding activities with 5' to 3' polarity. Activity of helicase is dependent on magnesium. Its function is as follows. Plays a role in viral RNA synthesis through two distinct activities. The N7-guanine methyltransferase activity plays a role in the formation of the cap structure GpppA-RNA. The proofreading exoribonuclease reduces the sensitivity of the virus to RNA mutagens during replication. This activity acts on both ssRNA and dsRNA in a 3'-5' direction. Functionally, plays a role in viral transcription/replication and prevents the simultaneous activation of host cell dsRNA sensors, such as MDA5/IFIH1, OAS, and PKR. Acts by degrading the 5'-polyuridines generated during replication of the poly(A) region of viral genomic and subgenomic RNAs. Catalyzes a two-step reaction in which a 2'3'-cyclic phosphate (2'3'-cP) is first generated by 2'-O transesterification, which is then hydrolyzed to a 3'-phosphate (3'-P). If not degraded, poly(U) RNA would hybridize with poly(A) RNA tails and activate host dsRNA sensors. Methyltransferase that mediates mRNA cap 2'-O-ribose methylation to the 5'-cap structure of viral mRNAs. N7-methyl guanosine cap is a prerequisite for binding of nsp16. Therefore plays an essential role in viral mRNAs cap methylation which is essential to evade immune system. The polypeptide is Replicase polyprotein 1ab (rep) (Bos taurus (Bovine)).